The primary structure comprises 620 residues: Two-component response regulator ORR27 (620 aa).

In terms of domain architecture, Response regulatory spans 24 to 138; sequence HVLVVDDDAA…AIKFIWKHVL (115 aa). Aspartate 76 is subject to 4-aspartylphosphate. Disordered regions lie at residues 171–197 and 215–257; these read PPAV…AELS and VWSS…LEAT. Positions 261–321 form a DNA-binding region, myb-like GARP; that stretch reads KKVRTRFTWT…HLQKYRSWLE (61 aa). Positions 431 to 456 are enriched in polar residues; that stretch reads SVSRDAHENGNSQARGSAMSNGTSGT. Disordered stretches follow at residues 431 to 457, 501 to 523, and 596 to 620; these read SVSR…SGTR, SDQN…NSKT, and PPRG…SSGP. Polar residues predominate over residues 603–620; that stretch reads EIASHENTNGKNGASSGP.

It belongs to the ARR family. Type-B subfamily. In terms of processing, two-component system major event consists of a His-to-Asp phosphorelay between a sensor histidine kinase (HK) and a response regulator (RR). In plants, the His-to-Asp phosphorelay involves an additional intermediate named Histidine-containing phosphotransfer protein (HPt). This multistep phosphorelay consists of a His-Asp-His-Asp sequential transfer of a phosphate group between first a His and an Asp of the HK protein, followed by the transfer to a conserved His of the HPt protein and finally the transfer to an Asp in the receiver domain of the RR protein.

The protein resides in the nucleus. In terms of biological role, transcriptional activator that binds specific DNA sequence. Functions as a response regulator involved in His-to-Asp phosphorelay signal transduction system. Phosphorylation of the Asp residue in the receiver domain activates the ability of the protein to promote the transcription of target genes. May directly activate some type-A response regulators in response to cytokinins. This chain is Two-component response regulator ORR27, found in Oryza sativa subsp. japonica (Rice).